The sequence spans 473 residues: Proline transporter 1 (473 aa).

The segment covering 1-11 (MDQHQLDEENQ) has biased composition (basic and acidic residues). The tract at residues 1–31 (MDQHQLDEENQRAALFHSSAPSSSLGADGEE) is disordered. 11 helical membrane-spanning segments follow: residues 65 to 85 (PWYQ…VLGY), 88 to 108 (SIMV…AAAI), 145 to 165 (LTWA…IILA), 188 to 208 (IALS…LSAL), 210 to 230 (IWLG…FVMS), 252 to 272 (IFTT…GMLP), 290 to 310 (LWFQ…MGYW), 333 to 353 (VANL…ASPM), 378 to 398 (VGVR…LPFL), 401 to 421 (FMSL…ANHM), and 437 to 457 (WHWL…VAAV).

Belongs to the amino acid/polyamine transporter 2 family. Amino acid/auxin permease (AAAP) (TC 2.A.18.3) subfamily. As to expression, expressed in roots, leaf blades and sheaths, stems and young panicle.

The protein localises to the cell membrane. Its function is as follows. Proline transporter that mediates proline transport across the plasma membrane when expressed in a heterologous system (Xenopus oocytes). This Oryza sativa subsp. japonica (Rice) protein is Proline transporter 1 (PROT1).